We begin with the raw amino-acid sequence, 130 residues long: MMSLRSAFALLPLFLFLIVANVESRKDVGEYWKLVMKDQDMPEEIQGLLDASNIKNSKTHAKENKGAIGEFEPCPNASAYGDNEIHANENKGAIGEFETRPNGSAYGDNEIGAEFTDDFEPRPSMTKYNA.

A run of 2 repeats spans residues 60–85 and 86–111. Residues 60-111 are 2 X 26 AA tandem repeats; sequence HAKENKGAIGEFEPCPNASAYGDNEIHANENKGAIGEFETRPNGSAYGDNEI. Residues 79-130 form a disordered region; that stretch reads AYGDNEIHANENKGAIGEFETRPNGSAYGDNEIGAEFTDDFEPRPSMTKYNA.

This sequence to organ specific protein S2. In terms of tissue distribution, expressed in pods.

The protein is Organ-specific protein P4 of Pisum sativum (Garden pea).